Reading from the N-terminus, the 108-residue chain is Heme oxygenase (staphylobilin-producing) (108 aa).

Positions 2 to 93 (FMAENRLQLQ…DDDGQQSPIL (92 aa)) constitute an ABM domain. Residue asparagine 6 coordinates Fe cation. Residues 21 to 28 (RFYNRQGI) and histidine 76 each bind heme.

The protein belongs to the antibiotic biosynthesis monooxygenase family. Heme-degrading monooxygenase IsdG subfamily. In terms of assembly, homodimer.

The protein localises to the cytoplasm. The enzyme catalyses heme b + 5 AH2 + 4 O2 + 2 H(+) = delta-staphylobilin + Fe(2+) + formaldehyde + 5 A + 4 H2O. It carries out the reaction heme b + 5 AH2 + 4 O2 + 2 H(+) = beta-staphylobilin + Fe(2+) + formaldehyde + 5 A + 4 H2O. In terms of biological role, allows bacterial pathogens to use the host heme as an iron source. Catalyzes the oxidative degradation of the heme macrocyclic porphyrin ring to the oxo-bilirubin chromophore staphylobilin (a mixture of the linear tetrapyrroles 5-oxo-delta-bilirubin and 15-oxo-beta-bilirubin) in the presence of a suitable electron donor such as ascorbate or NADPH--cytochrome P450 reductase, with subsequent release of free iron. This chain is Heme oxygenase (staphylobilin-producing) (isdI), found in Staphylococcus aureus (strain Mu3 / ATCC 700698).